A 143-amino-acid chain; its full sequence is Nucleoside diphosphate kinase (143 aa).

The ATP site is built by Lys-11, Phe-59, Arg-87, Thr-93, Arg-104, and Asn-114. His-117 (pros-phosphohistidine intermediate) is an active-site residue.

Belongs to the NDK family. As to quaternary structure, homotetramer. It depends on Mg(2+) as a cofactor.

Its subcellular location is the cytoplasm. It carries out the reaction a 2'-deoxyribonucleoside 5'-diphosphate + ATP = a 2'-deoxyribonucleoside 5'-triphosphate + ADP. The catalysed reaction is a ribonucleoside 5'-diphosphate + ATP = a ribonucleoside 5'-triphosphate + ADP. In terms of biological role, major role in the synthesis of nucleoside triphosphates other than ATP. The ATP gamma phosphate is transferred to the NDP beta phosphate via a ping-pong mechanism, using a phosphorylated active-site intermediate. The chain is Nucleoside diphosphate kinase from Idiomarina loihiensis (strain ATCC BAA-735 / DSM 15497 / L2-TR).